The sequence spans 589 residues: Zinc finger protein 131 (589 aa).

The BTB domain occupies 34-98 (TDITLIVDGH…TYTAKLMIQG (65 aa)). The short motif at 137–148 (TGKNEAKKRKIA) is the Nuclear localization signal 1 element. Positions 224–234 (GDRKGQIKEDG) are enriched in basic and acidic residues. The interval 224–247 (GDRKGQIKEDGCPSDPTSKQEHMK) is disordered. C2H2-type zinc fingers lie at residues 254–277 (FKCE…NCYH) and 294–316 (HVCQ…LRKH). Residues Lys255 and Lys261 each participate in a glycyl lysine isopeptide (Lys-Gly) (interchain with G-Cter in SUMO2) cross-link. Positions 283–294 (VSKKQRTGKKIH) match the Nuclear localization signal 2 motif. Residues 322–347 (FECPNCHERFARNSTLKCHLTACQTG) form a C2H2-type 3; degenerate zinc finger. 2 C2H2-type zinc fingers span residues 358-380 (YECQ…LVIH) and 386-409 (NHCT…SDAH). Positions 539–583 (NQEERESSQADAAEAAREDHEDAEDLETKPTVDSEAEKAENEDRT) are enriched in basic and acidic residues. The disordered stretch occupies residues 539-589 (NQEERESSQADAAEAAREDHEDAEDLETKPTVDSEAEKAENEDRTAMPVLE). A Glycyl lysine isopeptide (Lys-Gly) (interchain with G-Cter in SUMO) cross-link involves residue Lys567.

It belongs to the krueppel C2H2-type zinc-finger protein family. Monosumoylated at Lys-567 by CBX4 and UHRF2. Sumoylation may potentiate ZNF131 inhibition of estrogen signaling. Sumoylation does not interfere with ubiquitination. Post-translationally, ubiquitinated.

The protein resides in the nucleus. Functionally, may be involved in transcriptional regulation as a repressor of ESR1/ER-alpha signaling. Plays a role during development and organogenesis as well as in the function of the adult central nervous system. The chain is Zinc finger protein 131 (ZNF131) from Pongo abelii (Sumatran orangutan).